A 321-amino-acid chain; its full sequence is Arabinan endo-1,5-alpha-L-arabinosidase A (321 aa).

The N-terminal stretch at 1-19 (MYSLLTALSVPLLAGLAHG) is a signal peptide. Aspartate 34 (proton acceptor) is an active-site residue. Asparagine 192 carries N-linked (GlcNAc...) asparagine glycosylation. Glutamate 200 acts as the Proton donor in catalysis.

The protein belongs to the glycosyl hydrolase 43 family.

It is found in the secreted. It catalyses the reaction Endohydrolysis of (1-&gt;5)-alpha-arabinofuranosidic linkages in (1-&gt;5)-arabinans.. The protein operates within glycan metabolism; L-arabinan degradation. Functionally, endo-1,5-alpha-L-arabinanase involved in degradation of pectin. Its preferred substrate is linear 1,5-alpha-L-arabinan. This is Arabinan endo-1,5-alpha-L-arabinosidase A (abnA) from Aspergillus aculeatus.